The chain runs to 327 residues: DNA primase large subunit PriL (327 aa).

Positions 218, 290, 299, and 307 each coordinate [4Fe-4S] cluster.

This sequence belongs to the eukaryotic-type primase large subunit family. Heterodimer of a small subunit (PriS) and a large subunit (PriL). It depends on [4Fe-4S] cluster as a cofactor.

In terms of biological role, regulatory subunit of DNA primase, an RNA polymerase that catalyzes the synthesis of short RNA molecules used as primers for DNA polymerase during DNA replication. Stabilizes and modulates the activity of the small subunit, increasing the rate of DNA synthesis, and conferring RNA synthesis capability. The DNA polymerase activity may enable DNA primase to also catalyze primer extension after primer synthesis. May also play a role in DNA repair. This chain is DNA primase large subunit PriL, found in Thermoplasma volcanium (strain ATCC 51530 / DSM 4299 / JCM 9571 / NBRC 15438 / GSS1).